Here is a 159-residue protein sequence, read N- to C-terminus: Protransforming growth factor alpha (159 aa).

Residues 1-23 (MVPATGQLALLALGILLAVCQAL) form the signal peptide. A propeptide spans 24 to 38 (ENSTSPLSDSPVAAA) (removed in mature form). Residues 24-97 (ENSTSPLSDS…AVVAASQKKQ (74 aa)) lie on the Extracellular side of the membrane. Asn-25 is a glycosylation site (N-linked (GlcNAc...) asparagine). The EGF-like domain maps to 44–83 (NKCPDSHTQYCFHGTCRFLVQEEKPACVCHSGYVGVRCEH). Disulfide bonds link Cys-46–Cys-59, Cys-54–Cys-70, and Cys-72–Cys-81. The propeptide at 89 to 159 (VVAASQKKQA…TACCHSETVV (71 aa)) is removed in mature form. The helical transmembrane segment at 98-123 (AITALVVVSIVALAVLIITCVLIHCC) threads the bilayer. The Cytoplasmic segment spans residues 124–159 (QLRKHCEWCRALVCRHEKPSALLKGRTACCHSETVV). 2 S-palmitoyl cysteine lipidation sites follow: Cys-152 and Cys-153.

Interacts with the PDZ domains of SDCBP and SNTA1. The interaction with SDCBP, is required for the targeting to the cell surface. In the endoplasmic reticulum, in its immature form (i.e. with a prosegment and lacking full N-glycosylation), interacts with CNIH. In the Golgi apparatus, may form a complex with CNIH and GORASP2. Interacts (via cytoplasmic C-terminal domain) with NKD2. Interacts with MAGI3.

It is found in the secreted. The protein resides in the extracellular space. The protein localises to the cell membrane. Its function is as follows. TGF alpha is a mitogenic polypeptide that is able to bind to the EGF receptor/EGFR and to act synergistically with TGF beta to promote anchorage-independent cell proliferation in soft agar. The chain is Protransforming growth factor alpha (Tgfa) from Mus musculus (Mouse).